Reading from the N-terminus, the 251-residue chain is Imidazole glycerol phosphate synthase subunit HisF (251 aa).

Residues D11 and D130 contribute to the active site.

It belongs to the HisA/HisF family. As to quaternary structure, heterodimer of HisH and HisF.

Its subcellular location is the cytoplasm. The enzyme catalyses 5-[(5-phospho-1-deoxy-D-ribulos-1-ylimino)methylamino]-1-(5-phospho-beta-D-ribosyl)imidazole-4-carboxamide + L-glutamine = D-erythro-1-(imidazol-4-yl)glycerol 3-phosphate + 5-amino-1-(5-phospho-beta-D-ribosyl)imidazole-4-carboxamide + L-glutamate + H(+). The protein operates within amino-acid biosynthesis; L-histidine biosynthesis; L-histidine from 5-phospho-alpha-D-ribose 1-diphosphate: step 5/9. Functionally, IGPS catalyzes the conversion of PRFAR and glutamine to IGP, AICAR and glutamate. The HisF subunit catalyzes the cyclization activity that produces IGP and AICAR from PRFAR using the ammonia provided by the HisH subunit. This chain is Imidazole glycerol phosphate synthase subunit HisF, found in Parabacteroides distasonis (strain ATCC 8503 / DSM 20701 / CIP 104284 / JCM 5825 / NCTC 11152).